We begin with the raw amino-acid sequence, 318 residues long: Tyrosine recombinase XerC (318 aa).

Residues 17–108 (PEVMAERRRW…GLRSFLRYLE (92 aa)) enclose the Core-binding (CB) domain. The 184-residue stretch at 129-312 (SLPKALTDRE…DSARLLEIYD (184 aa)) folds into the Tyr recombinase domain. Active-site residues include Arg172, Lys196, His264, Arg267, and His290. The active-site O-(3'-phospho-DNA)-tyrosine intermediate is Tyr299.

It belongs to the 'phage' integrase family. XerC subfamily. As to quaternary structure, forms a cyclic heterotetrameric complex composed of two molecules of XerC and two molecules of XerD.

It is found in the cytoplasm. Site-specific tyrosine recombinase, which acts by catalyzing the cutting and rejoining of the recombining DNA molecules. The XerC-XerD complex is essential to convert dimers of the bacterial chromosome into monomers to permit their segregation at cell division. It also contributes to the segregational stability of plasmids. In Rhizobium meliloti (strain 1021) (Ensifer meliloti), this protein is Tyrosine recombinase XerC.